A 926-amino-acid chain; its full sequence is Alanine--tRNA ligase (926 aa).

Histidine 615, histidine 619, cysteine 719, and histidine 723 together coordinate Zn(2+). Residues 887–910 (RVGGGGGGPPDFAQGGGPDADALD) form a disordered region. Residues 888–904 (VGGGGGGPPDFAQGGGP) are compositionally biased toward gly residues.

The protein belongs to the class-II aminoacyl-tRNA synthetase family. Zn(2+) is required as a cofactor.

It is found in the cytoplasm. It catalyses the reaction tRNA(Ala) + L-alanine + ATP = L-alanyl-tRNA(Ala) + AMP + diphosphate. Catalyzes the attachment of alanine to tRNA(Ala) in a two-step reaction: alanine is first activated by ATP to form Ala-AMP and then transferred to the acceptor end of tRNA(Ala). Also edits incorrectly charged Ser-tRNA(Ala) and Gly-tRNA(Ala) via its editing domain. This Halorubrum lacusprofundi (strain ATCC 49239 / DSM 5036 / JCM 8891 / ACAM 34) protein is Alanine--tRNA ligase.